We begin with the raw amino-acid sequence, 208 residues long: Protein-L-isoaspartate O-methyltransferase (208 aa).

Serine 59 is an active-site residue.

It belongs to the methyltransferase superfamily. L-isoaspartyl/D-aspartyl protein methyltransferase family.

The protein resides in the cytoplasm. The enzyme catalyses [protein]-L-isoaspartate + S-adenosyl-L-methionine = [protein]-L-isoaspartate alpha-methyl ester + S-adenosyl-L-homocysteine. Functionally, catalyzes the methyl esterification of L-isoaspartyl residues in peptides and proteins that result from spontaneous decomposition of normal L-aspartyl and L-asparaginyl residues. It plays a role in the repair and/or degradation of damaged proteins. The polypeptide is Protein-L-isoaspartate O-methyltransferase (Vibrio cholerae serotype O1 (strain ATCC 39541 / Classical Ogawa 395 / O395)).